The following is a 221-amino-acid chain: Urease accessory protein UreF (221 aa).

This sequence belongs to the UreF family. In terms of assembly, ureD, UreF and UreG form a complex that acts as a GTP-hydrolysis-dependent molecular chaperone, activating the urease apoprotein by helping to assemble the nickel containing metallocenter of UreC. The UreE protein probably delivers the nickel.

The protein resides in the cytoplasm. Functionally, required for maturation of urease via the functional incorporation of the urease nickel metallocenter. In Teredinibacter turnerae (strain ATCC 39867 / T7901), this protein is Urease accessory protein UreF.